The primary structure comprises 415 residues: Diaminopimelate decarboxylase (415 aa).

Lys54 carries the N6-(pyridoxal phosphate)lysine modification. Residues Gly223 and 264 to 267 each bind pyridoxal 5'-phosphate; that span reads EPGR. Substrate contacts are provided by Arg267, Arg303, and Tyr307. Catalysis depends on Cys338, which acts as the Proton donor. The substrate site is built by Glu339 and Tyr374. Tyr374 serves as a coordination point for pyridoxal 5'-phosphate.

It belongs to the Orn/Lys/Arg decarboxylase class-II family. LysA subfamily. Homodimer. Pyridoxal 5'-phosphate is required as a cofactor.

It catalyses the reaction meso-2,6-diaminopimelate + H(+) = L-lysine + CO2. It functions in the pathway amino-acid biosynthesis; L-lysine biosynthesis via DAP pathway; L-lysine from DL-2,6-diaminopimelate: step 1/1. Specifically catalyzes the decarboxylation of meso-diaminopimelate (meso-DAP) to L-lysine. This is Diaminopimelate decarboxylase from Buchnera aphidicola subsp. Schizaphis graminum (strain Sg).